Consider the following 168-residue polypeptide: Large ribosomal subunit protein uL10 (168 aa).

It belongs to the universal ribosomal protein uL10 family. As to quaternary structure, part of the ribosomal stalk of the 50S ribosomal subunit. The N-terminus interacts with L11 and the large rRNA to form the base of the stalk. The C-terminus forms an elongated spine to which L12 dimers bind in a sequential fashion forming a multimeric L10(L12)X complex.

Functionally, forms part of the ribosomal stalk, playing a central role in the interaction of the ribosome with GTP-bound translation factors. This is Large ribosomal subunit protein uL10 from Clostridioides difficile (strain 630) (Peptoclostridium difficile).